The primary structure comprises 250 residues: MGQKVNPVGLRLGINRTWDSRWFADGNQYGKLLHQDLAVRAALKKRLYQAGVSRIIIERPHKKCRVTIYAARPGVIIGKKGADIDKLRKDLSIMTEGEVHLNIVEIRKPETDAQLVAESIAQQLERRIAFRRAMKRSIQSAVRLGAKGIRINVSGRLGGAEIARMEWYREGRVPLHTLRADIDFGFAEAKTTYGIIGVKTWIFKGEVLEHDPMALDKRLATESGPAGEGGGRERGDRPDRGDRRDRRDRA.

A KH type-2 domain is found at 39–107 (VRAALKKRLY…EVHLNIVEIR (69 aa)). Residues 215–250 (LDKRLATESGPAGEGGGRERGDRPDRGDRRDRRDRA) are disordered. Positions 230 to 250 (GGRERGDRPDRGDRRDRRDRA) are enriched in basic and acidic residues.

The protein belongs to the universal ribosomal protein uS3 family. In terms of assembly, part of the 30S ribosomal subunit. Forms a tight complex with proteins S10 and S14.

Its function is as follows. Binds the lower part of the 30S subunit head. Binds mRNA in the 70S ribosome, positioning it for translation. The polypeptide is Small ribosomal subunit protein uS3 (Caulobacter vibrioides (strain ATCC 19089 / CIP 103742 / CB 15) (Caulobacter crescentus)).